The sequence spans 271 residues: Malonyl-[acyl-carrier protein] O-methyltransferase (271 aa).

It belongs to the methyltransferase superfamily.

The catalysed reaction is malonyl-[ACP] + S-adenosyl-L-methionine = malonyl-[ACP] methyl ester + S-adenosyl-L-homocysteine. Its pathway is cofactor biosynthesis; biotin biosynthesis. Converts the free carboxyl group of a malonyl-thioester to its methyl ester by transfer of a methyl group from S-adenosyl-L-methionine (SAM). It allows to synthesize pimeloyl-ACP via the fatty acid synthetic pathway. The polypeptide is Malonyl-[acyl-carrier protein] O-methyltransferase (Halalkalibacterium halodurans (strain ATCC BAA-125 / DSM 18197 / FERM 7344 / JCM 9153 / C-125) (Bacillus halodurans)).